A 377-amino-acid polypeptide reads, in one-letter code: Chaperone protein DnaJ (377 aa).

One can recognise a J domain in the interval 5–70 (DYYEILGVER…EKRAAYDQYG (66 aa)). The segment at 134–212 (GITKDIQIQT…CHGDGRVHKT (79 aa)) adopts a CR-type zinc-finger fold. Residues Cys-147, Cys-150, Cys-164, Cys-167, Cys-186, Cys-189, Cys-200, and Cys-203 each contribute to the Zn(2+) site. CXXCXGXG motif repeat units lie at residues 147–154 (CDHCNGSG), 164–171 (CPTCHGHG), 186–193 (CPHCHGTG), and 200–207 (CKKCHGDG).

This sequence belongs to the DnaJ family. Homodimer. Zn(2+) serves as cofactor.

The protein resides in the cytoplasm. Participates actively in the response to hyperosmotic and heat shock by preventing the aggregation of stress-denatured proteins and by disaggregating proteins, also in an autonomous, DnaK-independent fashion. Unfolded proteins bind initially to DnaJ; upon interaction with the DnaJ-bound protein, DnaK hydrolyzes its bound ATP, resulting in the formation of a stable complex. GrpE releases ADP from DnaK; ATP binding to DnaK triggers the release of the substrate protein, thus completing the reaction cycle. Several rounds of ATP-dependent interactions between DnaJ, DnaK and GrpE are required for fully efficient folding. Also involved, together with DnaK and GrpE, in the DNA replication of plasmids through activation of initiation proteins. The protein is Chaperone protein DnaJ of Actinobacillus succinogenes (strain ATCC 55618 / DSM 22257 / CCUG 43843 / 130Z).